We begin with the raw amino-acid sequence, 540 residues long: NXPE family member 1 (540 aa).

Positions 1-22 (MLHKYLKLICLLAAICVLCIIS) are cleaved as a signal peptide. Residues Asn-24, Asn-42, Asn-87, Asn-155, Asn-205, and Asn-291 are each glycosylated (N-linked (GlcNAc...) asparagine).

Belongs to the NXPE family. Intestine, and to a lesser extent in kidney.

The protein localises to the secreted. This Oryctolagus cuniculus (Rabbit) protein is NXPE family member 1 (NXPE1).